The sequence spans 759 residues: TIR domain-containing adapter molecule 1 (759 aa).

Positions 1 to 153 are TRIF-NTD; sequence MACTGPSLSG…CGWDVLGDLG (153 aa). The TRAF6-binding motif lies at 84–91; that stretch reads ETPEEPPD. The pLxIS motif signature appears at 207–210; the sequence is LEIS. Ser-210 is subject to Phosphoserine. Lys-229 participates in a covalent cross-link: Glycyl lysine isopeptide (Lys-Gly) (interchain with G-Cter in ubiquitin). A disordered region spans residues 241-296; it reads EPAPMGCQEPEEMSWPPSVEAADSPVRPSSPGPGLPEVTTDACPASPHDPPEVPEI. Short sequence motifs (TRAF6-binding) lie at residues 248–255 and 299–309; these read QEPEEMSW and HYPVECTDVPA. The segment at 340-426 is disordered; sequence LSAQPRPPTP…PEPPPPELES (87 aa). Over residues 351-365 the composition is skewed to low complexity; it reads VPQTSPSFPSASTSP. Residues 366 to 376 are compositionally biased toward pro residues; the sequence is FPSPSTPPEAH. Positions 430–590 constitute a TIR domain; it reads KFYNFVVLHA…QDARALREQS (161 aa). The sufficient to induce apoptosis stretch occupies residues 549 to 759; it reads LLDEHSKIFA…APEDNTRETE (211 aa). Residues 642–723 form a disordered region; the sequence is GQGSLGTPPS…PPARPQSPGL (82 aa). Residues 659-705 show a composition bias toward pro residues; that stretch reads HQPPPLPPWLGGTPPPIFPQPPQTFPQPPPTFPQPPPTFQQPPPACP.

In terms of assembly, homodimer. Found in a multi-helicase-TICAM1 complex at least composed of DHX36, DDX1, DDX21 and TICAM1; this complex exists in resting cells with or without poly(I:C) RNA ligand stimulation. Interacts (via TIR domain) with DDX21 (via C-terminus). Interacts (via TIR domain) with DHX36 (via C-terminus). Interacts with AZI2 and IRF7. Interacts with TICAM2 in TLR4 recruitment. Interaction with PIAS4 inhibits the TICAM1-induced NF-kappa-B, IRF and IFNB1 activation. Interacts with IKBKB and IKBKE. Interaction with SARM1 blocks TICAM1-dependent transcription factor activation. Interacts with TRAF3. Interacts (when phosphorylated) with IRF3; following activation and phosphorylation on the pLxIS motif by TBK1, recruits IRF3. Interacts with TBK1, TRAF6 and RIPK1 and these interactions are enhanced in the presence of WDFY1. Interacts with TRAFD1. Interacts with UBQLN1 (via UBA domain). Interacts with TLR4 in response to LPS in a WDFY1-dependent manner. Interacts with WDFY1 in response to poly(I:C). Interacts (via the TIR domain) with TLR3 in response to poly(I:C) and this interaction is enhanced in the presence of WDFY1. Interacts with TRIM56. Component of a multi-helicase-TICAM1 complex that acts as a cytoplasmic sensor of viral double-stranded RNA (dsRNA) and plays a role in the activation of a cascade of antiviral responses including the induction of pro-inflammatory cytokines. Interacts (via the TIR domain) with TLR5. Interacts with TRIM8. Interacts with TAX1BP1 and TRIM32; these interactions target TICAM1 to TAX1BP1-mediated selective autophagic degradation. Interacts with DDX50. In terms of processing, phosphorylated by TBK1. Following activation, phosphorylated by TBK1 at Ser-210 in the pLxIS motif. The phosphorylated pLxIS motif constitutes an IRF3-binding motif, leading to recruitment of the transcription factor IRF3 to induce type-I interferons and other cytokines. Post-translationally, polyubiquitinated at Lys-229 by TRIM38 with 'Lys-48'-linked chains, leading to proteasomal degradation. Polyubiquitinated with 'Lys-6' and 'Lys-33'-linked chains in a TRIM8-dependent manner.

It is found in the cytoplasmic vesicle. It localises to the autophagosome. The protein resides in the cytoplasm. Its subcellular location is the cytosol. The protein localises to the mitochondrion. Functionally, involved in innate immunity against invading pathogens. Adapter used by TLR3, TLR4 (through TICAM2) and TLR5 to mediate NF-kappa-B and interferon-regulatory factor (IRF) activation, and to induce apoptosis. Ligand binding to these receptors results in TRIF recruitment through its TIR domain. Distinct protein-interaction motifs allow recruitment of the effector proteins TBK1, TRAF6 and RIPK1, which in turn, lead to the activation of transcription factors IRF3 and IRF7, NF-kappa-B and FADD respectively. Phosphorylation by TBK1 on the pLxIS motif leads to recruitment and subsequent activation of the transcription factor IRF3 to induce expression of type I interferon and exert a potent immunity against invading pathogens. Component of a multi-helicase-TICAM1 complex that acts as a cytoplasmic sensor of viral double-stranded RNA (dsRNA) and plays a role in the activation of a cascade of antiviral responses including the induction of pro-inflammatory cytokines. The chain is TIR domain-containing adapter molecule 1 (TICAM1) from Bos taurus (Bovine).